Here is a 657-residue protein sequence, read N- to C-terminus: THO complex subunit 1 (657 aa).

Met-1 carries the post-translational modification N-acetylmethionine. The residue at position 2 (Ser-2) is a Phosphoserine. Thr-4 carries the phosphothreonine modification. Residue Lys-31 forms a Glycyl lysine isopeptide (Lys-Gly) (interchain with G-Cter in SUMO2) linkage. The residue at position 133 (Lys-133) is an N6-acetyllysine. Positions 133-167 (KNYLLRMCNDLLRRLSKSQNTVFCGRIQLFLARLF) are dock domain; interaction with THOC2. The interval 194–222 (QESTLGQKHTEDREEGMDVEEGEMGDEEA) is disordered. The span at 206–222 (REEGMDVEEGEMGDEEA) shows a compositional bias: acidic residues. Residues 227–397 (SIPIDYNLYR…WNSWKNEGCP (171 aa)) are dock domain; interaction with THOC2. Lys-300 carries the N6-acetyllysine modification. Lys-408 is covalently cross-linked (Glycyl lysine isopeptide (Lys-Gly) (interchain with G-Cter in SUMO2)). The Nuclear localization signal motif lies at 414–430 (RKRTAPEDFLGKGPTKK). The segment at 533–569 (LPPPSEEIKTGEDEDEEDNDALLKENESPDVRRDKPV) is disordered. Residue Ser-537 is modified to Phosphoserine. The residue at position 542 (Thr-542) is a Phosphothreonine. A compositionally biased stretch (basic and acidic residues) spans 553-569 (ALLKENESPDVRRDKPV). A Phosphoserine modification is found at Ser-560. The 84-residue stretch at 570–653 (TGEQIEVFAN…DLAESLTNDN (84 aa)) folds into the Death domain. Lys-580 participates in a covalent cross-link: Glycyl lysine isopeptide (Lys-Gly) (interchain with G-Cter in SUMO2). A Glycyl lysine isopeptide (Lys-Gly) (interchain with G-Cter in SUMO1); alternate cross-link involves residue Lys-595. A Glycyl lysine isopeptide (Lys-Gly) (interchain with G-Cter in SUMO2); alternate cross-link involves residue Lys-595.

This sequence belongs to the THOC1 family. As to quaternary structure, component of the THO subcomplex, which is composed of THOC1, THOC2, THOC3, THOC5, THOC6 and THOC7. The THO subcomplex interacts with DDX39B to form the THO-DDX39B complex which multimerizes into a 28-subunit tetrameric assembly. Component of the transcription/export (TREX) complex at least composed of ALYREF/THOC4, DDX39B, SARNP/CIP29, CHTOP and the THO subcomplex; in the complex interacts with THOC2, THOC5 and THOC7. TREX seems to have a dynamic structure involving ATP-dependent remodeling. Binds to the hypophosphorylated form of RB1. Interacts with RNA polymerase II. Interacts with LUZP4. In terms of processing, expression is altered specifically during apoptosis and is accompanied by the appearance of novel forms with smaller apparent molecular mass. Post-translationally, polyubiquitinated, leading to proteasomal degradation; probably involves NEDD4. In terms of tissue distribution, ubiquitous. Expressed in various cancer cell lines. Expressed at very low levels in normal breast epithelial cells and highly expressed in breast tumors. Expression is strongly associated with an aggressive phenotype of breast tumors and expression correlates with tumor size and the metastatic state of the tumor progression.

It is found in the nucleus speckle. The protein resides in the nucleus. Its subcellular location is the nucleoplasm. It localises to the nucleus matrix. The protein localises to the cytoplasm. In terms of biological role, component of the THO subcomplex of the TREX complex which is thought to couple mRNA transcription, processing and nuclear export, and which specifically associates with spliced mRNA and not with unspliced pre-mRNA. Required for efficient export of polyadenylated RNA. The THOC1-THOC2-THOC3 core complex alone is sufficient to bind export factor NXF1-NXT1 and promote ATPase activity of DDX39B/UAP56. TREX is recruited to spliced mRNAs by a transcription-independent mechanism, binds to mRNA upstream of the exon-junction complex (EJC) and is recruited in a splicing- and cap-dependent manner to a region near the 5' end of the mRNA where it functions in mRNA export to the cytoplasm via the TAP/NXF1 pathway. Regulates transcriptional elongation of a subset of genes. Involved in genome stability by preventing co-transcriptional R-loop formation. May play a role in hair cell formation, hence may be involved in hearing. Participates in an apoptotic pathway which is characterized by activation of caspase-6, increases in the expression of BAK1 and BCL2L1 and activation of NF-kappa-B. This pathway does not require p53/TP53, nor does the presence of p53/TP53 affect the efficiency of cell killing. Activates a G2/M cell cycle checkpoint prior to the onset of apoptosis. Apoptosis is inhibited by association with RB1. Its function is as follows. (Microbial infection) The TREX complex is essential for the export of Kaposi's sarcoma-associated herpesvirus (KSHV) intronless mRNAs and infectious virus production. The chain is THO complex subunit 1 (THOC1) from Homo sapiens (Human).